The primary structure comprises 486 residues: Aspartyl/glutamyl-tRNA(Asn/Gln) amidotransferase subunit B (486 aa).

Belongs to the GatB/GatE family. GatB subfamily. In terms of assembly, heterotrimer of A, B and C subunits.

The enzyme catalyses L-glutamyl-tRNA(Gln) + L-glutamine + ATP + H2O = L-glutaminyl-tRNA(Gln) + L-glutamate + ADP + phosphate + H(+). It catalyses the reaction L-aspartyl-tRNA(Asn) + L-glutamine + ATP + H2O = L-asparaginyl-tRNA(Asn) + L-glutamate + ADP + phosphate + 2 H(+). Allows the formation of correctly charged Asn-tRNA(Asn) or Gln-tRNA(Gln) through the transamidation of misacylated Asp-tRNA(Asn) or Glu-tRNA(Gln) in organisms which lack either or both of asparaginyl-tRNA or glutaminyl-tRNA synthetases. The reaction takes place in the presence of glutamine and ATP through an activated phospho-Asp-tRNA(Asn) or phospho-Glu-tRNA(Gln). In Leptospira interrogans serogroup Icterohaemorrhagiae serovar Lai (strain 56601), this protein is Aspartyl/glutamyl-tRNA(Asn/Gln) amidotransferase subunit B.